A 193-amino-acid chain; its full sequence is MKFETPSRFKFTPYLEREYQFGLDPNRPLCRGFLQFDGCPRGNSCPDKHLAPTFLNKIVCKHWLRGLCKKGLNCEFLHEYNLQKMPECQFYVKNGFCTQSPDCQYLHIDPASKIPVCFNYEKGFCKMGPECSRKHIRRMPCELYMTGFCPKGRVCEFAHPKFVGIYDYMIIKPNPKDKAKDETKQETKEEALQ.

C3H1-type zinc fingers lie at residues 24 to 52 (DPNR…HLAP), 54 to 81 (FLNK…HEYN), 82 to 110 (LQKM…HIDP), 111 to 138 (ASKI…HIRR), and 140 to 162 (PCEL…HPKF).

Belongs to the CPSF4/YTH1 family.

The protein resides in the nucleus. In terms of biological role, component of the cleavage factor I (CF I) involved in pre-mRNA 3'-end processing. This is mRNA 3'-end-processing protein YTH1 (YTH1) from Yarrowia lipolytica (strain CLIB 122 / E 150) (Yeast).